We begin with the raw amino-acid sequence, 166 residues long: uncharacterized protein (166 aa).

4Fe-4S ferredoxin-type domains lie at 3–33 (MKKI…GRIA), 37–67 (KDGK…EHKD), and 68–97 (GYVY…MEDK). Cysteine 13, cysteine 16, cysteine 19, cysteine 23, cysteine 46, cysteine 49, cysteine 54, cysteine 58, cysteine 77, cysteine 80, cysteine 83, cysteine 87, cysteine 101, cysteine 104, cysteine 111, and cysteine 115 together coordinate [4Fe-4S] cluster.

[4Fe-4S] cluster serves as cofactor.

This is an uncharacterized protein from Methanocaldococcus jannaschii (strain ATCC 43067 / DSM 2661 / JAL-1 / JCM 10045 / NBRC 100440) (Methanococcus jannaschii).